The chain runs to 260 residues: MADS-box transcription factor 29 (260 aa).

One can recognise an MADS-box domain in the interval 1 to 61 (MGRGKIEIKR…GKMFEYCSPT (61 aa)). One can recognise a K-box domain in the interval 85-175 (DQQIFVEMTR…CRMINENHHQ (91 aa)).

As to expression, expressed in developing seeds.

It is found in the nucleus. Its function is as follows. Probable transcription factor. The chain is MADS-box transcription factor 29 (MADS29) from Oryza sativa subsp. japonica (Rice).